The primary structure comprises 142 residues: Large ribosomal subunit protein uL11 (142 aa).

The protein belongs to the universal ribosomal protein uL11 family. Part of the ribosomal stalk of the 50S ribosomal subunit. Interacts with L10 and the large rRNA to form the base of the stalk. L10 forms an elongated spine to which L12 dimers bind in a sequential fashion forming a multimeric L10(L12)X complex. One or more lysine residues are methylated.

Functionally, forms part of the ribosomal stalk which helps the ribosome interact with GTP-bound translation factors. The polypeptide is Large ribosomal subunit protein uL11 (Shewanella frigidimarina (strain NCIMB 400)).